The primary structure comprises 102 residues: Protein S100-A11 (102 aa).

S2 bears the Phosphoserine mark. The residue at position 7 (T7) is a Phosphothreonine. EF-hand domains follow at residues E12 to F47 and K52 to A87. K24 is subject to N6-acetyllysine. 8 residues coordinate Ca(2+): S28, T30, E35, D65, N67, D69, Q71, and E76.

This sequence belongs to the S-100 family. Homodimer; disulfide-linked. Post-translationally, phosphorylation at Thr-7 significantly suppresses homodimerization and promotes association with NCL/nucleolin which induces nuclear translocation. Smooth muscle and non-muscle tissues.

It is found in the cytoplasm. It localises to the nucleus. Its function is as follows. Facilitates the differentiation and the cornification of keratinocytes. The protein is Protein S100-A11 (S100A11) of Oryctolagus cuniculus (Rabbit).